Reading from the N-terminus, the 581-residue chain is MDQSTTQIYKRLISYVGAYRTVAIVAIIGMIGYSGMDALFIQLMKPFIDEGLNERNADVLKYAPFVVIALVIGRGVFNFMSSYCLSYVGSQVVRSLRQELFEHILHLPVSFHDKNSTGDLISKITFDTEQVQQAITKALLIVVREGAFVVFLLAVMFYTSWQLSLIFLVIIPLVAVIVTVVSKRFRHISKSIQSAMGQVTRSSEQMLSGHKVIHGFGGQNQEIDQFSKVNNHNRQQRIKMDATKALSVSIIQVLAASAMAVILWVVSMPSMIDTISSGDFVVLISSMMMLLRPLKQLANVNSDMQRGVSAAQSVFLILDEEVEKDTGTVSVDKVKGLIEVKNVTFKYPTKDEPVLNNLSLTIKAGESIALVGRSGSGKSTISNLLPRYYDLEAPSEILLDGIALHDYKLTDLRRQFALVSQQVVLFNDSIANNICYGLQREISQQELEKVAKQAHVWEFVKDLPEQLNTMVGENGVMLSGGQRQRIAIARAILKDAPILILDEATSALDTESEKLIQQALEALMKDKTSIVIAHRLSTIENSDRIYVIDNGSVIESGDHLSLLANNGTYSALCKMQFGEQG.

The next 6 helical transmembrane spans lie at 21 to 41 (TVAI…ALFI), 65 to 85 (FVVI…SYCL), 138 to 158 (ALLI…VMFY), 161 to 181 (WQLS…VTVV), 246 to 266 (LSVS…LWVV), and 271 to 291 (MIDT…MMLL). The region spanning 24–306 (IVAIIGMIGY…LANVNSDMQR (283 aa)) is the ABC transmembrane type-1 domain. The region spanning 338-575 (IEVKNVTFKY…NGTYSALCKM (238 aa)) is the ABC transporter domain. Residue 372-379 (GRSGSGKS) participates in ATP binding.

The protein belongs to the ABC transporter superfamily. Lipid exporter (TC 3.A.1.106) family. In terms of assembly, homodimer.

It is found in the cell inner membrane. It catalyses the reaction ATP + H2O + lipid A-core oligosaccharideSide 1 = ADP + phosphate + lipid A-core oligosaccharideSide 2.. Its function is as follows. Involved in lipopolysaccharide (LPS) biosynthesis. Translocates lipid A-core from the inner to the outer leaflet of the inner membrane. Transmembrane domains (TMD) form a pore in the inner membrane and the ATP-binding domain (NBD) is responsible for energy generation. The chain is ATP-dependent lipid A-core flippase from Pseudoalteromonas translucida (strain TAC 125).